The sequence spans 878 residues: Alanine--tRNA ligase (878 aa).

The Zn(2+) site is built by histidine 558, histidine 562, cysteine 663, and histidine 667.

This sequence belongs to the class-II aminoacyl-tRNA synthetase family. Zn(2+) is required as a cofactor.

The protein localises to the cytoplasm. The catalysed reaction is tRNA(Ala) + L-alanine + ATP = L-alanyl-tRNA(Ala) + AMP + diphosphate. Functionally, catalyzes the attachment of alanine to tRNA(Ala) in a two-step reaction: alanine is first activated by ATP to form Ala-AMP and then transferred to the acceptor end of tRNA(Ala). Also edits incorrectly charged Ser-tRNA(Ala) and Gly-tRNA(Ala) via its editing domain. The protein is Alanine--tRNA ligase of Mycoplasmopsis synoviae (strain 53) (Mycoplasma synoviae).